Here is a 245-residue protein sequence, read N- to C-terminus: 8-amino-3,8-dideoxy-manno-octulosonate cytidylyltransferase (245 aa).

This sequence belongs to the KdsB family.

Its subcellular location is the cytoplasm. It carries out the reaction 8-amino-3,8-dideoxy-alpha-D-manno-octulosonate + CTP = CMP-8-amino-3,8-dideoxy-alpha-D-manno-oct-2-ulosonate + diphosphate. It participates in bacterial outer membrane biogenesis; lipopolysaccharide biosynthesis. In terms of biological role, activates KDO8N (a required 8-carbon sugar) for incorporation into bacterial lipopolysaccharide in the Shewanella genus. In Shewanella baltica (strain OS223), this protein is 8-amino-3,8-dideoxy-manno-octulosonate cytidylyltransferase.